Here is a 134-residue protein sequence, read N- to C-terminus: Large ribosomal subunit protein uL22 (134 aa).

The protein belongs to the universal ribosomal protein uL22 family. As to quaternary structure, part of the 50S ribosomal subunit.

In terms of biological role, this protein binds specifically to 23S rRNA; its binding is stimulated by other ribosomal proteins, e.g. L4, L17, and L20. It is important during the early stages of 50S assembly. It makes multiple contacts with different domains of the 23S rRNA in the assembled 50S subunit and ribosome. Functionally, the globular domain of the protein is located near the polypeptide exit tunnel on the outside of the subunit, while an extended beta-hairpin is found that lines the wall of the exit tunnel in the center of the 70S ribosome. The protein is Large ribosomal subunit protein uL22 of Rhodococcus erythropolis (strain PR4 / NBRC 100887).